Consider the following 177-residue polypeptide: Large ribosomal subunit protein uL6 (177 aa).

This sequence belongs to the universal ribosomal protein uL6 family. In terms of assembly, part of the 50S ribosomal subunit.

This protein binds to the 23S rRNA, and is important in its secondary structure. It is located near the subunit interface in the base of the L7/L12 stalk, and near the tRNA binding site of the peptidyltransferase center. In Cupriavidus pinatubonensis (strain JMP 134 / LMG 1197) (Cupriavidus necator (strain JMP 134)), this protein is Large ribosomal subunit protein uL6.